The chain runs to 84 residues: Small ribosomal subunit protein uS17 (84 aa).

This sequence belongs to the universal ribosomal protein uS17 family. Part of the 30S ribosomal subunit.

One of the primary rRNA binding proteins, it binds specifically to the 5'-end of 16S ribosomal RNA. In Clostridium perfringens (strain SM101 / Type A), this protein is Small ribosomal subunit protein uS17.